Consider the following 361-residue polypeptide: Serine/threonine-protein kinase SRK2I (361 aa).

Residues 22-278 (YDFVKDIGSG…IPEIKTHSWF (257 aa)) form the Protein kinase domain. ATP is bound by residues 28–36 (IGSGNFGVA) and Lys51. The active-site Proton acceptor is the Asp141.

This sequence belongs to the protein kinase superfamily. Ser/Thr protein kinase family. Interacts with ABI1. Interacts with I-2 and TOPP1. Interacts with FREE1 (via C-terminus). In terms of processing, autophosphorylated in vitro. Expressed at low levels in seeds, seedlings, roots (especially in tips), stems, leaves, shoots, flowers and siliques.

The enzyme catalyses L-seryl-[protein] + ATP = O-phospho-L-seryl-[protein] + ADP + H(+). The catalysed reaction is L-threonyl-[protein] + ATP = O-phospho-L-threonyl-[protein] + ADP + H(+). Its activity is regulated as follows. Activated by autophosphorylation of its activation loop. Its function is as follows. Together with SRK2D, key component and activator of the abscisic acid (ABA) signaling pathway that regulates numerous ABA responses, such as seed germination, Pro accumulation, root growth inhibition, dormancy and seedling growth, and, to a lesser extent, stomatal closure. In response to ABA, phosphorylates the ESCRT-I complex component FREE1, which is required for ABA-induced FREE1 nuclear import. This Arabidopsis thaliana (Mouse-ear cress) protein is Serine/threonine-protein kinase SRK2I (SRK2I).